The chain runs to 151 residues: Peptide deformylase (151 aa).

Fe cation-binding residues include cysteine 88 and histidine 130. Residue glutamate 131 is part of the active site. Histidine 134 contacts Fe cation.

This sequence belongs to the polypeptide deformylase family. Fe(2+) is required as a cofactor.

The enzyme catalyses N-terminal N-formyl-L-methionyl-[peptide] + H2O = N-terminal L-methionyl-[peptide] + formate. Its function is as follows. Removes the formyl group from the N-terminal Met of newly synthesized proteins. Requires at least a dipeptide for an efficient rate of reaction. N-terminal L-methionine is a prerequisite for activity but the enzyme has broad specificity at other positions. This Heliobacterium modesticaldum (strain ATCC 51547 / Ice1) protein is Peptide deformylase.